A 370-amino-acid polypeptide reads, in one-letter code: Keratin-associated protein 10-7 (370 aa).

The interval 36 to 363 (DCPESCCEPP…CSRPACCGPT (328 aa)) is 30 X 5 AA repeats of C-C-X(3). Repeat copies occupy residues 41-45 (CCEPP), 46-50 (CCAPA), 67-71 (CCRVT), 89-93 (CCQQS), 99-103 (CCASS), 109-113 (CCVPV), 114-118 (CCKTV), 119-123 (CCKPV), 135-139 (CCQQS), 145-149 (CCTSS), 155-159 (CCVPI), 160-164 (CCKPV), 172-176 (CCQQS), 186-190 (CCQAV), 208-212 (CCQQS), 218-222 (CCTSS), 228-232 (CCVPV), 233-237 (CCKPV), 238-242 (CCVPT), 250-254 (CCQPA), 255-259 (CCTSS), 265-269 (CCVPV), 270-274 (CCKPV), 275-279 (CCVPV), 287-291 (CCQQS), 297-301 (CCTTS), 302-306 (CCRPS), 321-325 (CCVPV), 339-343 (CCRPA), and 359-363 (CCGPT).

This sequence belongs to the KRTAP type 10 family. As to quaternary structure, interacts with hair keratins. As to expression, restricted to a narrow region of the hair fiber cuticle, lying approximately 20 cell layers above the apex of the dermal papilla of the hair root; not detected in any other tissues.

Functionally, in the hair cortex, hair keratin intermediate filaments are embedded in an interfilamentous matrix, consisting of hair keratin-associated proteins (KRTAP), which are essential for the formation of a rigid and resistant hair shaft through their extensive disulfide bond cross-linking with abundant cysteine residues of hair keratins. The matrix proteins include the high-sulfur and high-glycine-tyrosine keratins. This chain is Keratin-associated protein 10-7 (KRTAP10-7), found in Homo sapiens (Human).